We begin with the raw amino-acid sequence, 158 residues long: D-aminoacyl-tRNA deacylase (158 aa).

The short motif at 138–139 is the Gly-cisPro motif, important for rejection of L-amino acids element; it reads GP.

The protein belongs to the DTD family. In terms of assembly, homodimer.

It is found in the cytoplasm. The catalysed reaction is glycyl-tRNA(Ala) + H2O = tRNA(Ala) + glycine + H(+). It carries out the reaction a D-aminoacyl-tRNA + H2O = a tRNA + a D-alpha-amino acid + H(+). Its function is as follows. An aminoacyl-tRNA editing enzyme that deacylates mischarged D-aminoacyl-tRNAs. Hydrolyzes correctly charged, achiral, glycyl-tRNA(Gly). Deacylates mischarged endogenous and E.coli glycyl-tRNA(Ala), protecting cells against glycine mischarging by AlaRS. Acts via tRNA-based rather than protein-based catalysis; rejects L-amino acids rather than detecting D-amino acids in the active site. By recycling D-aminoacyl-tRNA to D-amino acids and free tRNA molecules, this enzyme counteracts the toxicity associated with the formation of D-aminoacyl-tRNA entities in vivo and helps enforce protein L-homochirality. This Drosophila melanogaster (Fruit fly) protein is D-aminoacyl-tRNA deacylase.